The chain runs to 452 residues: Molybdate-anion transporter (452 aa).

12 helical membrane passes run 1-21, 45-65, 79-99, 130-150, 180-200, 201-221, 251-271, 281-301, 316-336, 346-366, 377-397, and 410-430; these read MLLT…VLEF, YDFY…GPYL, IAII…VSAP, FVLI…FSSF, NGGI…WLGL, GPAS…ALVI, VLLL…FIFL, TPLG…SSLY, VLCL…FSTA, LLAF…MGFL, IGVL…GLLV, and MFSL…SLFT.

This sequence belongs to the major facilitator superfamily.

Its subcellular location is the cell membrane. Its function is as follows. Mediates high-affinity intracellular uptake of the rare oligo-element molybdenum. This chain is Molybdate-anion transporter (mfsd5), found in Xenopus tropicalis (Western clawed frog).